The following is a 547-amino-acid chain: Chaperonin GroEL (547 aa).

Residues 30–33 (TLGP), lysine 51, 87–91 (DGTTT), glycine 415, 479–481 (NAA), and aspartate 495 contribute to the ATP site.

This sequence belongs to the chaperonin (HSP60) family. Forms a cylinder of 14 subunits composed of two heptameric rings stacked back-to-back. Interacts with the co-chaperonin GroES.

Its subcellular location is the cytoplasm. It carries out the reaction ATP + H2O + a folded polypeptide = ADP + phosphate + an unfolded polypeptide.. Its function is as follows. Together with its co-chaperonin GroES, plays an essential role in assisting protein folding. The GroEL-GroES system forms a nano-cage that allows encapsulation of the non-native substrate proteins and provides a physical environment optimized to promote and accelerate protein folding. This chain is Chaperonin GroEL, found in Pseudomonas syringae pv. syringae (strain B728a).